We begin with the raw amino-acid sequence, 121 residues long: Large ribosomal subunit protein bL12 (121 aa).

It belongs to the bacterial ribosomal protein bL12 family. Homodimer. Part of the ribosomal stalk of the 50S ribosomal subunit. Forms a multimeric L10(L12)X complex, where L10 forms an elongated spine to which 2 to 4 L12 dimers bind in a sequential fashion. Binds GTP-bound translation factors.

In terms of biological role, forms part of the ribosomal stalk which helps the ribosome interact with GTP-bound translation factors. Is thus essential for accurate translation. The protein is Large ribosomal subunit protein bL12 of Halalkalibacterium halodurans (strain ATCC BAA-125 / DSM 18197 / FERM 7344 / JCM 9153 / C-125) (Bacillus halodurans).